The following is a 245-amino-acid chain: MLLIPAIDLKEGRCVRLRQGLMEEATVFSDSPAETALHWFEQGARRLHLVDLNGAFAGVPQNLPAIKDILAAVAKDIPVQLGGGIRDLKTIGQYLDLGLNDVIIGTAAVKNPDFVREACKAFPGRIIVGLDAKDGMAAIDGWATVTGHHVIDLAKRFEDDGVNSIIYTDIGRDGMMSGVNIDATVKLAQAVRIPVIASGGLTGLDDIRALCAAEKHGVAGAITGRAIYEGSIDFAQAQQLADSLD.

The active-site Proton acceptor is the Asp8. Residue Asp131 is the Proton donor of the active site.

The protein belongs to the HisA/HisF family.

The protein localises to the cytoplasm. The enzyme catalyses 1-(5-phospho-beta-D-ribosyl)-5-[(5-phospho-beta-D-ribosylamino)methylideneamino]imidazole-4-carboxamide = 5-[(5-phospho-1-deoxy-D-ribulos-1-ylimino)methylamino]-1-(5-phospho-beta-D-ribosyl)imidazole-4-carboxamide. It participates in amino-acid biosynthesis; L-histidine biosynthesis; L-histidine from 5-phospho-alpha-D-ribose 1-diphosphate: step 4/9. This chain is 1-(5-phosphoribosyl)-5-[(5-phosphoribosylamino)methylideneamino] imidazole-4-carboxamide isomerase, found in Neisseria meningitidis serogroup C / serotype 2a (strain ATCC 700532 / DSM 15464 / FAM18).